The chain runs to 211 residues: 2,3-bisphosphoglycerate-dependent phosphoglycerate mutase (211 aa).

Residues 9–16, 22–23, Arg61, 88–91, Lys99, 115–116, and 159–160 contribute to the substrate site; these read RHGQSDWN, TG, ERDY, RR, and GN. The active-site Tele-phosphohistidine intermediate is the His10. The Proton donor/acceptor role is filled by Glu88.

The protein belongs to the phosphoglycerate mutase family. BPG-dependent PGAM subfamily. Homodimer.

It carries out the reaction (2R)-2-phosphoglycerate = (2R)-3-phosphoglycerate. It participates in carbohydrate degradation; glycolysis; pyruvate from D-glyceraldehyde 3-phosphate: step 3/5. In terms of biological role, catalyzes the interconversion of 2-phosphoglycerate and 3-phosphoglycerate. In Rhizobium johnstonii (strain DSM 114642 / LMG 32736 / 3841) (Rhizobium leguminosarum bv. viciae), this protein is 2,3-bisphosphoglycerate-dependent phosphoglycerate mutase.